Reading from the N-terminus, the 196-residue chain is Ribosome maturation factor RimP (196 aa).

The disordered stretch occupies residues 163-196 (GLAPSKPTGPAPKRPKPKTNSSSNEPAAKKPRAE).

The protein belongs to the RimP family.

The protein localises to the cytoplasm. Required for maturation of 30S ribosomal subunits. This is Ribosome maturation factor RimP from Stenotrophomonas maltophilia (strain R551-3).